Here is a 360-residue protein sequence, read N- to C-terminus: S-adenosylmethionine:tRNA ribosyltransferase-isomerase (360 aa).

The protein belongs to the QueA family. In terms of assembly, monomer.

The protein resides in the cytoplasm. It catalyses the reaction 7-aminomethyl-7-carbaguanosine(34) in tRNA + S-adenosyl-L-methionine = epoxyqueuosine(34) in tRNA + adenine + L-methionine + 2 H(+). It functions in the pathway tRNA modification; tRNA-queuosine biosynthesis. Its function is as follows. Transfers and isomerizes the ribose moiety from AdoMet to the 7-aminomethyl group of 7-deazaguanine (preQ1-tRNA) to give epoxyqueuosine (oQ-tRNA). The polypeptide is S-adenosylmethionine:tRNA ribosyltransferase-isomerase (Rhodopseudomonas palustris (strain BisB5)).